A 178-amino-acid chain; its full sequence is Riboflavin kinase (178 aa).

The Mg(2+) site is built by Thr39 and Asn41. The active-site Nucleophile is Glu116.

It belongs to the flavokinase family. It depends on Zn(2+) as a cofactor. Mg(2+) is required as a cofactor.

It catalyses the reaction riboflavin + ATP = FMN + ADP + H(+). It functions in the pathway cofactor biosynthesis; FMN biosynthesis; FMN from riboflavin (ATP route): step 1/1. Catalyzes the phosphorylation of riboflavin (vitamin B2) to form flavin mononucleotide (FMN) coenzyme. The protein is Riboflavin kinase (FMN1) of Scheffersomyces stipitis (strain ATCC 58785 / CBS 6054 / NBRC 10063 / NRRL Y-11545) (Yeast).